The sequence spans 216 residues: Octanoyltransferase (216 aa).

A BPL/LPL catalytic domain is found at 29–209 (DRAGECVWLL…SFDAVFGPCP (181 aa)). Residues 68 to 75 (RGGQYTYH), 140 to 142 (AIG), and 153 to 155 (GFA) contribute to the substrate site. The Acyl-thioester intermediate role is filled by cysteine 171.

Belongs to the LipB family.

The protein resides in the cytoplasm. The catalysed reaction is octanoyl-[ACP] + L-lysyl-[protein] = N(6)-octanoyl-L-lysyl-[protein] + holo-[ACP] + H(+). Its pathway is protein modification; protein lipoylation via endogenous pathway; protein N(6)-(lipoyl)lysine from octanoyl-[acyl-carrier-protein]: step 1/2. Its function is as follows. Catalyzes the transfer of endogenously produced octanoic acid from octanoyl-acyl-carrier-protein onto the lipoyl domains of lipoate-dependent enzymes. Lipoyl-ACP can also act as a substrate although octanoyl-ACP is likely to be the physiological substrate. The polypeptide is Octanoyltransferase (Rhodospirillum rubrum (strain ATCC 11170 / ATH 1.1.1 / DSM 467 / LMG 4362 / NCIMB 8255 / S1)).